The chain runs to 129 residues: Large-conductance mechanosensitive channel (129 aa).

The next 3 helical transmembrane spans lie at 14 to 34 (IIDL…VTSL), 38 to 58 (IIMP…SFVY), and 67 to 87 (LGVF…IFMA).

Belongs to the MscL family. As to quaternary structure, homopentamer.

It is found in the cell membrane. Functionally, channel that opens in response to stretch forces in the membrane lipid bilayer. May participate in the regulation of osmotic pressure changes within the cell. The polypeptide is Large-conductance mechanosensitive channel (Lysinibacillus sphaericus (strain C3-41)).